We begin with the raw amino-acid sequence, 63 residues long: Large ribosomal subunit protein eL37 (63 aa).

Residues C20, C23, C35, and C38 each contribute to the Zn(2+) site. The C4-type zinc-finger motif lies at 20 to 38; it reads CRRCGRRAFNVKKGYCAAC.

This sequence belongs to the eukaryotic ribosomal protein eL37 family. In terms of assembly, part of the 50S ribosomal subunit. Zn(2+) is required as a cofactor.

Its function is as follows. Binds to the 23S rRNA. This is Large ribosomal subunit protein eL37 from Thermococcus kodakarensis (strain ATCC BAA-918 / JCM 12380 / KOD1) (Pyrococcus kodakaraensis (strain KOD1)).